Consider the following 109-residue polypeptide: Thiosulfate sulfurtransferase GlpE (109 aa).

A Rhodanese domain is found at 16–104 (REQGAVVVDI…WRTTYPAEIS (89 aa)). The active-site Cysteine persulfide intermediate is cysteine 64.

This sequence belongs to the GlpE family.

Its subcellular location is the cytoplasm. The catalysed reaction is thiosulfate + hydrogen cyanide = thiocyanate + sulfite + 2 H(+). It carries out the reaction thiosulfate + [thioredoxin]-dithiol = [thioredoxin]-disulfide + hydrogen sulfide + sulfite + 2 H(+). In terms of biological role, transferase that catalyzes the transfer of sulfur from thiosulfate to thiophilic acceptors such as cyanide or dithiols. May function in a CysM-independent thiosulfate assimilation pathway by catalyzing the conversion of thiosulfate to sulfite, which can then be used for L-cysteine biosynthesis. The sequence is that of Thiosulfate sulfurtransferase GlpE from Pseudomonas fluorescens (strain SBW25).